The sequence spans 327 residues: Undecaprenyl-phosphate 4-deoxy-4-formamido-L-arabinose transferase (327 aa).

2 consecutive transmembrane segments (helical) span residues 236 to 256 (LSLV…LLVV) and 270 to 290 (VFTL…GMGL).

It belongs to the glycosyltransferase 2 family.

Its subcellular location is the cell inner membrane. The enzyme catalyses UDP-4-deoxy-4-formamido-beta-L-arabinose + di-trans,octa-cis-undecaprenyl phosphate = 4-deoxy-4-formamido-alpha-L-arabinopyranosyl di-trans,octa-cis-undecaprenyl phosphate + UDP. Its pathway is glycolipid biosynthesis; 4-amino-4-deoxy-alpha-L-arabinose undecaprenyl phosphate biosynthesis; 4-amino-4-deoxy-alpha-L-arabinose undecaprenyl phosphate from UDP-4-deoxy-4-formamido-beta-L-arabinose and undecaprenyl phosphate: step 1/2. It participates in bacterial outer membrane biogenesis; lipopolysaccharide biosynthesis. In terms of biological role, catalyzes the transfer of 4-deoxy-4-formamido-L-arabinose from UDP to undecaprenyl phosphate. The modified arabinose is attached to lipid A and is required for resistance to polymyxin and cationic antimicrobial peptides. The protein is Undecaprenyl-phosphate 4-deoxy-4-formamido-L-arabinose transferase of Yersinia enterocolitica serotype O:8 / biotype 1B (strain NCTC 13174 / 8081).